Consider the following 406-residue polypeptide: Zinc metalloprotease Rip1 (406 aa).

A helical membrane pass occupies residues 1–21 (MMFGIGIVLFALAILVSVALH). H21 lines the Zn(2+) pocket. The active site involves E22. H25 is a Zn(2+) binding site. A helical transmembrane segment spans residues 108–128 (PAMNFVIGLVLIYGIAIVWGL). In terms of domain architecture, PDZ spans 125 to 209 (VWGLPNLHQP…RIEFKRDGRV (85 aa)). D206 contributes to the Zn(2+) binding site. The next 2 helical transmembrane spans lie at 327–349 (NFVLGAINLVPLLPFDGGHIAVA) and 375–395 (LMPATYVVLAVVAGYMLLTVT).

Belongs to the peptidase M50B family. Zn(2+) is required as a cofactor.

The protein resides in the cell membrane. Proteolysis is inhibited by Wag31; when Wag31 is non-functional oxidative stress increases proteolysis. Functionally, a probable intramembrane site-2 protease (S2P) that cleaves type-2 transmembrane proteins within their membrane-spanning domains. Degrades PbpB (PBP3, FtsI) under conditions of oxidatives stress; degradation is inhibited by Wag31-PbpB interaction. Also cleaves anti-sigma factors RskA, RslA and RslM. Site-1 proteases have not yet been identified in this organism. In terms of biological role, regulated intramembrane proteolysis (RIP) occurs when an extracytoplasmic signal (possibly oxidative stress) triggers a concerted proteolytic cascade to transmit information and elicit cellular responses. The membrane-spanning regulatory substrate protein (includes anti-sigma factors RskA, RslA, RsmA, and PbpB) is first cut extracytoplasmically (site-1 protease, S1P), then within the membrane itself (site-2 protease, S2P, this entry), while cytoplasmic proteases finish degrading the regulatory protein, liberating the effector protein (ECF sigma factors SigK, SigL and SigM). In Mycolicibacterium smegmatis (strain ATCC 700084 / mc(2)155) (Mycobacterium smegmatis), this protein is Zinc metalloprotease Rip1 (rip1).